Here is a 1101-residue protein sequence, read N- to C-terminus: Leucine-rich repeat receptor-like serine/threonine-protein kinase At1g17230 (1101 aa).

Residues 1-23 form the signal peptide; that stretch reads MRGRICFLAIVILCSFSFILVRS. Residues 24 to 734 are Extracellular-facing; the sequence is LNEEGRVLLE…WLINGSQRQK (711 aa). N-linked (GlcNAc...) asparagine glycosylation is found at Asn-39, Asn-57, Asn-78, and Asn-97. 26 LRR repeats span residues 66–90, 91–115, 117–137, 138–162, 163–186, 188–210, 211–234, 235–258, 260–282, 283–306, 308–329, 330–354, 355–379, 381–402, 403–426, 427–450, 451–474, 476–498, 499–522, 524–546, 548–569, 570–593, 595–618, 619–643, 644–667, and 669–692; these read LRTV…ICKL, HGLR…SLCR, LEVL…QLTM, IITL…IGNL, SSLQ…MAKL, QLRI…ISGC, ESLK…LEKL, QNLT…VGNI, RLEV…IGKL, TKMK…IGNL, DAAE…EFGH, ILNL…LGEL, TLLE…QFLP, LVDL…IGFY, SNFS…FCRF, QTLI…LKTC, KSLT…LFNL, NLTA…LGKL, KNLE…IGNL, KIVG…LGSC, TIQR…ELGQ, LVYL…SFGD, TRLM…LGKL, TSLQ…LGNL, QMLE…IGNL, and SLLI…VFQR. 2 N-linked (GlcNAc...) asparagine glycosylation sites follow: Asn-161 and Asn-174. 2 N-linked (GlcNAc...) asparagine glycosylation sites follow: Asn-236 and Asn-257. An N-linked (GlcNAc...) asparagine glycan is attached at Asn-368. Asn-404 is a glycosylation site (N-linked (GlcNAc...) asparagine). 5 N-linked (GlcNAc...) asparagine glycosylation sites follow: Asn-476, Asn-490, Asn-510, Asn-521, and Asn-529. N-linked (GlcNAc...) asparagine glycosylation is found at Asn-626 and Asn-631. Asn-674 and Asn-728 each carry an N-linked (GlcNAc...) asparagine glycan. The chain crosses the membrane as a helical span at residues 735 to 755; it reads ILTITCIVIGSVFLITFLGLC. Over 756-1101 the chain is Cytoplasmic; that stretch reads WTIKRREPAF…LEEANSSKEI (346 aa). Residues Thr-788 and Thr-796 each carry the phosphothreonine modification. A Protein kinase domain is found at 799 to 1081; sequence FSEDVVLGRG…ITEARGSSSL (283 aa). Residues 805–813 and Lys-827 each bind ATP; that span reads LGRGACGTV. Phosphotyrosine is present on residues Tyr-874 and Tyr-913. Asp-926 serves as the catalytic Proton acceptor. Ser-960 bears the Phosphoserine mark. A phosphotyrosine mark is found at Tyr-968 and Tyr-975. Residue Thr-976 is modified to Phosphothreonine. Residues 1076–1101 form a disordered region; sequence RGSSSLSSSSITSETPLEEANSSKEI. Residues 1078-1088 are compositionally biased toward low complexity; it reads SSSLSSSSITS.

It belongs to the protein kinase superfamily. Ser/Thr protein kinase family.

It localises to the cell membrane. The enzyme catalyses L-seryl-[protein] + ATP = O-phospho-L-seryl-[protein] + ADP + H(+). The catalysed reaction is L-threonyl-[protein] + ATP = O-phospho-L-threonyl-[protein] + ADP + H(+). This Arabidopsis thaliana (Mouse-ear cress) protein is Leucine-rich repeat receptor-like serine/threonine-protein kinase At1g17230.